The sequence spans 715 residues: Serrate RNA effector molecule homolog (715 aa).

3 disordered regions span residues 1–87 (MDSD…YSGP), 223–259 (ENKDAAEKVEDQVKDEVKEEPNEEQEEGAIDDETDKA), and 629–715 (EPKH…DDIP). Basic and acidic residues-rich tracts occupy residues 7–25 (GDRRRDKFARERRDDDSYR), 37–57 (YDNKRPAGRREDYQVKRSRGD), and 223–242 (ENKDAAEKVEDQVKDEVKEE). Positions 243–256 (PNEEQEEGAIDDET) are enriched in acidic residues. Over residues 629–659 (EPKHMPHMSRDDHRGGGGDRGYGRERDDDRG) the composition is skewed to basic and acidic residues.

It belongs to the ARS2 family.

The protein localises to the nucleus. Functionally, acts as a mediator between the cap-binding complex (CBC) and the primary microRNAs (miRNAs) processing machinery. Contributes to the stability and delivery of capped primary miRNA transcripts to the primary miRNA processing complex, thereby playing a role in RNA-mediated gene silencing (RNAi) by miRNAs. The sequence is that of Serrate RNA effector molecule homolog from Caenorhabditis briggsae.